Reading from the N-terminus, the 230-residue chain is Cytidylate kinase (230 aa).

12-20 (GPSGAGKGT) is an ATP binding site.

It belongs to the cytidylate kinase family. Type 1 subfamily.

The protein localises to the cytoplasm. It catalyses the reaction CMP + ATP = CDP + ADP. The enzyme catalyses dCMP + ATP = dCDP + ADP. This chain is Cytidylate kinase, found in Aeromonas hydrophila subsp. hydrophila (strain ATCC 7966 / DSM 30187 / BCRC 13018 / CCUG 14551 / JCM 1027 / KCTC 2358 / NCIMB 9240 / NCTC 8049).